The chain runs to 140 residues: Methylglyoxal synthase (140 aa).

Residues 1 to 140 enclose the MGS-like domain; that stretch reads MRSKPRIALI…DQAAADDAAP (140 aa). Residues His-12, Lys-16, 38–41, and 58–59 each bind substrate; these read TGTT and SG. Asp-64 (proton donor/acceptor) is an active-site residue. His-91 is a substrate binding site.

Belongs to the methylglyoxal synthase family.

It carries out the reaction dihydroxyacetone phosphate = methylglyoxal + phosphate. Functionally, catalyzes the formation of methylglyoxal from dihydroxyacetone phosphate. The chain is Methylglyoxal synthase from Cupriavidus metallidurans (strain ATCC 43123 / DSM 2839 / NBRC 102507 / CH34) (Ralstonia metallidurans).